A 188-amino-acid chain; its full sequence is Large ribosomal subunit protein eL18 (188 aa).

Belongs to the eukaryotic ribosomal protein eL18 family.

It is found in the cytoplasm. The sequence is that of Large ribosomal subunit protein eL18 (RpL18) from Drosophila melanogaster (Fruit fly).